We begin with the raw amino-acid sequence, 261 residues long: Kallikrein 1-related peptidase b16 (261 aa).

The N-terminal stretch at 1–18 (MWFLILFLALSLGGIDAA) is a signal peptide. A propeptide spans 19 to 24 (PPVQSR) (activation peptide). The region spanning 25–258 (IVGGFKCEKN…FNSWIKDTMM (234 aa)) is the Peptidase S1 domain. Cystine bridges form between Cys31–Cys173, Cys50–Cys66, Cys152–Cys219, Cys184–Cys198, and Cys209–Cys234. The active-site Charge relay system is His65. A glycan (N-linked (GlcNAc...) asparagine) is linked at Asn102. Asp120 serves as the catalytic Charge relay system. The active-site Charge relay system is the Ser213.

Belongs to the peptidase S1 family. Kallikrein subfamily.

It carries out the reaction Cleavage of the Leu-|-Leu bond in synthetic tetradecapeptide renin substrate, to produce angiotensin I, but not active on natural angiotensinogen. Also hydrolyzes Bz-Arg-p-nitroanilide.. This Mus musculus (Mouse) protein is Kallikrein 1-related peptidase b16 (Klk1b16).